The chain runs to 266 residues: Undecaprenyl-diphosphatase (266 aa).

7 helical membrane-spanning segments follow: residues 41 to 61, 82 to 102, 106 to 126, 140 to 160, 180 to 200, 213 to 233, and 245 to 265; these read NLAF…VILW, YVIN…FFKD, AIFG…AALL, ISMK…LPGL, LAQF…LLDG, IPTL…CLAC, and LIYF…VSQL.

Belongs to the UppP family.

The protein resides in the cell inner membrane. It carries out the reaction di-trans,octa-cis-undecaprenyl diphosphate + H2O = di-trans,octa-cis-undecaprenyl phosphate + phosphate + H(+). In terms of biological role, catalyzes the dephosphorylation of undecaprenyl diphosphate (UPP). Confers resistance to bacitracin. This chain is Undecaprenyl-diphosphatase, found in Bacteroides fragilis (strain ATCC 25285 / DSM 2151 / CCUG 4856 / JCM 11019 / LMG 10263 / NCTC 9343 / Onslow / VPI 2553 / EN-2).